Here is a 112-residue protein sequence, read N- to C-terminus: Protein GAST1 (112 aa).

An N-terminal signal peptide occupies residues 1–25 (MAGKMSIVLFVLLVVFLTQNQVSRA).

Belongs to the GASA family. Six disulfide bonds may be present. In terms of tissue distribution, all shoot organs.

It localises to the secreted. The sequence is that of Protein GAST1 (GAST1) from Solanum lycopersicum (Tomato).